Consider the following 70-residue polypeptide: Protein SlyX homolog (70 aa).

The protein belongs to the SlyX family.

In Shewanella sediminis (strain HAW-EB3), this protein is Protein SlyX homolog.